We begin with the raw amino-acid sequence, 297 residues long: Bifunctional protein FolD 2 (297 aa).

Residues 173-175 (GKS), S198, and I239 contribute to the NADP(+) site.

The protein belongs to the tetrahydrofolate dehydrogenase/cyclohydrolase family. In terms of assembly, homodimer.

The enzyme catalyses (6R)-5,10-methylene-5,6,7,8-tetrahydrofolate + NADP(+) = (6R)-5,10-methenyltetrahydrofolate + NADPH. The catalysed reaction is (6R)-5,10-methenyltetrahydrofolate + H2O = (6R)-10-formyltetrahydrofolate + H(+). Its pathway is one-carbon metabolism; tetrahydrofolate interconversion. Its function is as follows. Catalyzes the oxidation of 5,10-methylenetetrahydrofolate to 5,10-methenyltetrahydrofolate and then the hydrolysis of 5,10-methenyltetrahydrofolate to 10-formyltetrahydrofolate. This is Bifunctional protein FolD 2 from Sinorhizobium medicae (strain WSM419) (Ensifer medicae).